The sequence spans 330 residues: Aspartate--ammonia ligase (330 aa).

It belongs to the class-II aminoacyl-tRNA synthetase family. AsnA subfamily.

Its subcellular location is the cytoplasm. It catalyses the reaction L-aspartate + NH4(+) + ATP = L-asparagine + AMP + diphosphate + H(+). It participates in amino-acid biosynthesis; L-asparagine biosynthesis; L-asparagine from L-aspartate (ammonia route): step 1/1. The polypeptide is Aspartate--ammonia ligase (Salmonella newport (strain SL254)).